The sequence spans 125 residues: uncharacterized protein (125 aa).

It localises to the mitochondrion. This is an uncharacterized protein from Paramecium tetraurelia.